Reading from the N-terminus, the 131-residue chain is Secreted RxLR effector protein 45 (131 aa).

The first 16 residues, 1 to 16 (MSIFIFISLVLGLAHQ), serve as a signal peptide directing secretion. Positions 56–59 (RPLR) match the RxLR motif. Asn128 carries N-linked (GlcNAc...) asparagine glycosylation.

It belongs to the RxLR effector family.

It localises to the secreted. It is found in the host nucleus. Its function is as follows. Secreted effector that completely suppresses the host cell death induced by cell death-inducing proteins. The sequence is that of Secreted RxLR effector protein 45 from Plasmopara viticola (Downy mildew of grapevine).